The chain runs to 335 residues: MALQALQSSGVAFRKILSHFPEELSLAFAYGSGVYRQAGPSSDQKNAMLDFVFTVDDPWHSKNLKRNWNHYSFLKVLGPRIITAVQNNYGAGVYYNTLITCDGRLIKYGVISTSVLIEDLLNWNNLYIAGRLQKPVKIVAMNEDVALRSALDQNLKSAVTAAFLMLPESFSEEDLFTEIAGLSYSGDFRMVVGEDKAKVLNIVKPNMAHFRELYGSILQESPQVVYKAQQGSLEIDKSPEGQFTQLMTLPKTLQQQINHIMDPPGKNRDVEETLLQVAHDPDCGDVVRLGLAAIVRPSSMRQSTKGIFTAGLKKSVVYSSLKLHKMWKGWVRKTS.

Belongs to the TAM41 family. Requires Mg(2+) as cofactor.

It localises to the mitochondrion inner membrane. The enzyme catalyses a 1,2-diacyl-sn-glycero-3-phosphate + CTP + H(+) = a CDP-1,2-diacyl-sn-glycerol + diphosphate. Its pathway is phospholipid metabolism; CDP-diacylglycerol biosynthesis; CDP-diacylglycerol from sn-glycerol 3-phosphate: step 3/3. Its function is as follows. Catalyzes the conversion of phosphatidic acid (PA) to CDP-diacylglycerol (CDP-DAG), an essential intermediate in the synthesis of phosphatidylglycerol, cardiolipin and phosphatidylinositol. This chain is Phosphatidate cytidylyltransferase, mitochondrial (TAMM41), found in Bos taurus (Bovine).